Here is a 1148-residue protein sequence, read N- to C-terminus: Signal transducer and activator of transcription B (1148 aa).

The span at 1 to 36 (MEVTNNGSNNSSTIASTNPPTSPSTTSTSKSLPPLS) shows a compositional bias: low complexity. Disordered regions lie at residues 1–81 (MEVT…NNNN), 93–178 (SSSN…LSSS), 268–312 (NTNN…PSNG), 403–425 (KNNI…NSLL), and 453–645 (YDYN…KTVT). Polar residues predominate over residues 37–47 (FLNSQWENKQS). 3 stretches are compositionally biased toward low complexity: residues 48 to 81 (NNNN…NNNN), 106 to 178 (NNNN…LSSS), and 268 to 298 (NTNN…NNNN). Over residues 466–517 (SNSSNNNSSNNNSNNNNNNNSNNNNNIIGSISPPHSSQLQQVSSPQQQQQQQ) the composition is skewed to low complexity. Residues 525-541 (SISSGSIKDLINSPNKE) show a composition bias toward polar residues. The span at 544–557 (SKSQYPSSLSQSSS) shows a compositional bias: low complexity. Residues 561–572 (MDTDVDSTDEFD) show a composition bias toward acidic residues. The segment covering 574–610 (GSNSNNNNNNNNNNNNNNNSNNSNNKKRNNSNNNNLG) has biased composition (low complexity). An SH2 domain is found at 997–1122 (WQNGFIFMFL…TIPVFKREPK (126 aa)).

It belongs to the transcription factor STAT family. As to quaternary structure, homodimer. Does not form heterodimers with other family members.

It localises to the nucleus. Transcription factor that regulates gene expression during development. Required for optimal cell growth. This is Signal transducer and activator of transcription B (dstB) from Dictyostelium discoideum (Social amoeba).